A 384-amino-acid chain; its full sequence is Chaperone protein DnaJ (384 aa).

Residues 5-70 (DFYEVLGVSK…DKKAAYDRYG (66 aa)) enclose the J domain. The CR-type zinc finger occupies 143–221 (GAQKTITVPG…CHGSGRIEKE (79 aa)). Zn(2+) contacts are provided by cysteine 156, cysteine 159, cysteine 173, cysteine 176, cysteine 195, cysteine 198, cysteine 209, and cysteine 212. CXXCXGXG motif repeat units follow at residues 156 to 163 (CGSCNGTG), 173 to 180 (CPTCSGLG), 195 to 202 (CPTCGGQG), and 209 to 216 (CRVCHGSG).

The protein belongs to the DnaJ family. As to quaternary structure, homodimer. Requires Zn(2+) as cofactor.

The protein localises to the cytoplasm. Its function is as follows. Participates actively in the response to hyperosmotic and heat shock by preventing the aggregation of stress-denatured proteins and by disaggregating proteins, also in an autonomous, DnaK-independent fashion. Unfolded proteins bind initially to DnaJ; upon interaction with the DnaJ-bound protein, DnaK hydrolyzes its bound ATP, resulting in the formation of a stable complex. GrpE releases ADP from DnaK; ATP binding to DnaK triggers the release of the substrate protein, thus completing the reaction cycle. Several rounds of ATP-dependent interactions between DnaJ, DnaK and GrpE are required for fully efficient folding. Also involved, together with DnaK and GrpE, in the DNA replication of plasmids through activation of initiation proteins. The sequence is that of Chaperone protein DnaJ from Rhodobacter capsulatus (Rhodopseudomonas capsulata).